A 239-amino-acid polypeptide reads, in one-letter code: 1-(5-phosphoribosyl)-5-[(5-phosphoribosylamino)methylideneamino] imidazole-4-carboxamide isomerase (239 aa).

Asp-8 acts as the Proton acceptor in catalysis. Asp-129 (proton donor) is an active-site residue.

Belongs to the HisA/HisF family.

It is found in the cytoplasm. It carries out the reaction 1-(5-phospho-beta-D-ribosyl)-5-[(5-phospho-beta-D-ribosylamino)methylideneamino]imidazole-4-carboxamide = 5-[(5-phospho-1-deoxy-D-ribulos-1-ylimino)methylamino]-1-(5-phospho-beta-D-ribosyl)imidazole-4-carboxamide. The protein operates within amino-acid biosynthesis; L-histidine biosynthesis; L-histidine from 5-phospho-alpha-D-ribose 1-diphosphate: step 4/9. The sequence is that of 1-(5-phosphoribosyl)-5-[(5-phosphoribosylamino)methylideneamino] imidazole-4-carboxamide isomerase from Legionella pneumophila subsp. pneumophila (strain Philadelphia 1 / ATCC 33152 / DSM 7513).